Here is a 1153-residue protein sequence, read N- to C-terminus: AP-3 complex subunit delta-1 (1153 aa).

Ala2 bears the N-acetylalanine mark. HEAT repeat units lie at residues 34-71, 77-114, 142-179, 180-216, 254-292, 299-336, 338-373, 375-409, 431-468, 497-535, and 548-585; these read KYIS…LGYD, FNII…LTTN, DLAR…KYPE, SLRP…RNPK, RLGK…SLSS, ASIQ…THPK, VQSH…KKNL, EIVK…QSNY, TRHG…SAHL, QEPH…SILQ, and AVTQ…IQKL. 2 disordered regions span residues 629–696 and 726–920; these read EPLS…YQDT and KLEE…PPES. Ser632, Ser634, Ser636, and Ser658 each carry phosphoserine. A compositionally biased stretch (basic and acidic residues) spans 639 to 675; that stretch reads ERPRAVFHEEEQRRPKHRPSEADEEELARRREARKQE. Residues 659–679 are a coiled coil; sequence EADEEELARRREARKQEQANN. Ser688 carries the phosphoserine modification. Residues 725–756 adopt a coiled-coil conformation; it reads VKLEEERRHRQKLEKDKRRKKRKEKEKKGKRR. A compositionally biased stretch (basic and acidic residues) spans 726–740; sequence KLEEERRHRQKLEKD. Basic residues predominate over residues 741–758; the sequence is KRRKKRKEKEKKGKRRHS. Residues Ser758 and Ser759 each carry the phosphoserine modification. The residue at position 762 (Thr762) is a Phosphothreonine. A phosphoserine mark is found at Ser764, Ala785, Ser788, Lys828, and Ser829. Positions 777–794 are enriched in acidic residues; the sequence is VTEEMPENALPSDEDDKD. Residues 795 to 839 show a composition bias toward basic and acidic residues; the sequence is PNDPYRALDIDLDKPLADSEKLPIQKHRNTETSKSPEKDVPMVEK. Composition is skewed to basic residues over residues 840-853 and 863-879; these read KSKK…KHKE and EKEK…KHRK. The stretch at 845–869 forms a coiled coil; that stretch reads KKKEKKHKEKERDKEKKKEKEKKKS. Residue Val931 is modified to Phosphoserine.

It belongs to the adaptor complexes large subunit family. In terms of assembly, AP-3 associates with the BLOC-1 complex. Adaptor protein complex 3 (AP-3) is a heterotetramer composed of two large adaptins (delta-type subunit AP3D1 and beta-type subunit AP3B1 or AP3B2), a medium adaptin (mu-type subunit AP3M1 or AP3M2) and a small adaptin (sigma-type subunit APS1 or AP3S2). Interacts with SLC30A2. Interacts with CLN3 (via dileucine motif); this interaction facilitates lysosomal targeting. As to expression, present in all adult tissues examined with the highest levels in skeletal muscle, heart, pancreas and testis.

The protein localises to the cytoplasm. The protein resides in the golgi apparatus membrane. Functionally, part of the AP-3 complex, an adaptor-related complex which is not clathrin-associated. The complex is associated with the Golgi region as well as more peripheral structures. It facilitates the budding of vesicles from the Golgi membrane and may be directly involved in trafficking to lysosomes. Involved in process of CD8+ T-cell and NK cell degranulation. In concert with the BLOC-1 complex, AP-3 is required to target cargos into vesicles assembled at cell bodies for delivery into neurites and nerve terminals. The protein is AP-3 complex subunit delta-1 (AP3D1) of Homo sapiens (Human).